The chain runs to 228 residues: Heptaprenylglyceryl phosphate synthase (228 aa).

Position 12 (K12) interacts with sn-glycerol 1-phosphate. Positions 14 and 40 each coordinate Mg(2+). Residues 159 to 164, G189, and 209 to 210 each bind sn-glycerol 1-phosphate; these read YLEYSG and GN.

It belongs to the GGGP/HepGP synthase family. Group I subfamily. Homodimer. The cofactor is Mg(2+).

It carries out the reaction sn-glycerol 1-phosphate + all-trans-heptaprenyl diphosphate = 3-heptaprenyl-sn-glycero-1-phosphate + diphosphate. The protein operates within membrane lipid metabolism; glycerophospholipid metabolism. In terms of biological role, prenyltransferase that catalyzes in vivo the transfer of the heptaprenyl moiety of heptaprenyl pyrophosphate (HepPP; 35 carbon atoms) to the C3 hydroxyl of sn-glycerol-1-phosphate (G1P), producing heptaprenylglyceryl phosphate (HepGP). This reaction is an ether-bond-formation step in the biosynthesis of archaea-type G1P-based membrane lipids found in Bacillales. The polypeptide is Heptaprenylglyceryl phosphate synthase (Geobacillus sp. (strain WCH70)).